A 73-amino-acid polypeptide reads, in one-letter code: Translation initiation factor IF-1 (73 aa).

One can recognise an S1-like domain in the interval Met1–Ile72.

Belongs to the IF-1 family. As to quaternary structure, component of the 30S ribosomal translation pre-initiation complex which assembles on the 30S ribosome in the order IF-2 and IF-3, IF-1 and N-formylmethionyl-tRNA(fMet); mRNA recruitment can occur at any time during PIC assembly.

Its subcellular location is the cytoplasm. Functionally, one of the essential components for the initiation of protein synthesis. Stabilizes the binding of IF-2 and IF-3 on the 30S subunit to which N-formylmethionyl-tRNA(fMet) subsequently binds. Helps modulate mRNA selection, yielding the 30S pre-initiation complex (PIC). Upon addition of the 50S ribosomal subunit IF-1, IF-2 and IF-3 are released leaving the mature 70S translation initiation complex. The polypeptide is Translation initiation factor IF-1 (Lactobacillus acidophilus (strain ATCC 700396 / NCK56 / N2 / NCFM)).